A 424-amino-acid polypeptide reads, in one-letter code: GTPase HflX (424 aa).

A Hflx-type G domain is found at 194 to 364 (YTVALTGYTG…AVVEMLPEKV (171 aa)). GTP-binding positions include 200–207 (GYTGAGKT), 225–229 (FATLS), 246–249 (DTIG), 314–317 (NKID), and 342–344 (SAA). Residues T207 and T227 each coordinate Mg(2+).

This sequence belongs to the TRAFAC class OBG-HflX-like GTPase superfamily. HflX GTPase family. As to quaternary structure, monomer. Associates with the 50S ribosomal subunit. Mg(2+) serves as cofactor.

The protein localises to the cytoplasm. Its function is as follows. GTPase that associates with the 50S ribosomal subunit and may have a role during protein synthesis or ribosome biogenesis. The polypeptide is GTPase HflX (Thermofilum pendens (strain DSM 2475 / Hrk 5)).